The primary structure comprises 708 residues: Prolyl 3-hydroxylase 2 (708 aa).

The first 24 residues, 1-24, serve as a signal peptide directing secretion; that stretch reads MRERIWAPPLLLLLPLLLPPPLWG. TPR repeat units lie at residues 44 to 77, 148 to 181, 210 to 243, and 306 to 339; these read FDLLYASGAAAYYSGDYERAVRDLEAALRSHRRL, RVPYNYLQRAYIKLNQLEKAVEAAHTFFVANPEH, HMESYNAGVKHYEADDFEMAIRHFEQALREYFVE, and PLHYDYLQFAYYRVGEYVKALECAKAYLLCHPDD. Asn-449 and Asn-549 each carry an N-linked (GlcNAc...) asparagine glycan. One can recognise a Fe2OG dioxygenase domain in the interval 557–671; sequence THMVCRTALS…RCAVALWFTL (115 aa). Positions 580, 582, and 652 each coordinate Fe cation. Arg-662 is a catalytic residue. The Prevents secretion from ER motif lies at 705–708; the sequence is KDEL.

This sequence belongs to the leprecan family. Fe cation is required as a cofactor. L-ascorbate serves as cofactor. Expression localized to the epithelia of bile ducts and to the sacroplasm of heart muscle and skeletal muscle. In the pancreas, localized to a subpopulation of Langerhans islet cells and in the salivary gland, expressed in acinar cells (at protein level). Expressed in adult heart, placenta, lung, liver, skeletal muscle and kidney. Detected in fetal heart, spleen, lung, liver skeletal muscle and kidney.

It is found in the endoplasmic reticulum. It localises to the sarcoplasmic reticulum. The protein resides in the golgi apparatus. It catalyses the reaction L-prolyl-[collagen] + 2-oxoglutarate + O2 = trans-3-hydroxy-L-prolyl-[collagen] + succinate + CO2. With respect to regulation, inhibited by pyridine 2,4-dicarboxylate, an analog of 2-oxoglutarate. In terms of biological role, prolyl 3-hydroxylase that catalyzes the post-translational formation of 3-hydroxyproline on collagens. Contributes to proline 3-hydroxylation of collagen COL4A1 and COL1A1 in tendons, the eye sclera and in the eye lens capsule. Has high activity with the type IV collagen COL4A1, and lower activity with COL1A1. Catalyzes hydroxylation of the first Pro in Gly-Pro-Hyp sequences where Hyp is 4-hydroxyproline. Has no activity on substrates that lack 4-hydroxyproline in the third position. The sequence is that of Prolyl 3-hydroxylase 2 from Homo sapiens (Human).